The chain runs to 54 residues: Large ribosomal subunit protein bL33 (54 aa).

It belongs to the bacterial ribosomal protein bL33 family.

This Chloroflexus aggregans (strain MD-66 / DSM 9485) protein is Large ribosomal subunit protein bL33.